The primary structure comprises 320 residues: Protein LATERAL ROOT PRIMORDIUM 1 (320 aa).

Positions 90–110 (QTTVGTSSNNSGSGSGASGTA) are disordered. Zn(2+) contacts are provided by Cys-112, Cys-115, Cys-123, Cys-128, Cys-132, and Cys-139. Positions 112 to 139 (CQDCGNQAKKECKQRRCRTCCKSRGFDC) form a DNA-binding region, zn(2)-C6 fungal-type; degenerate. Residues 150 to 223 (AARRRERQVM…QDGGGSREAW (74 aa)) are disordered. The span at 168–177 (GSSLSTSSGT) shows a compositional bias: low complexity. The span at 193–214 (ATSHTSTSNTPPQSFETSSSRQ) shows a compositional bias: polar residues. The Required for homo- and heterodimerization signature appears at 256–259 (IGGH).

The protein belongs to the SHI protein family. Homodimer. In terms of tissue distribution, restricted to lateral root primordia.

Its subcellular location is the nucleus. Transcription activator that binds DNA on 5'-ACTCTAC-3' and promotes auxin homeostasis-regulating gene expression (e.g. YUC genes), as well as genes affecting stamen development, cell expansion and timing of flowering. Synergistically with other SHI-related proteins, regulates gynoecium, stamen and leaf development in a dose-dependent manner, controlling apical-basal patterning. Promotes style and stigma formation, and influence vascular development during gynoecium development. May also have a role in the formation and/or maintenance of the shoot apical meristem (SAM). Modulates root growth. The sequence is that of Protein LATERAL ROOT PRIMORDIUM 1 (LRP1) from Arabidopsis thaliana (Mouse-ear cress).